The chain runs to 448 residues: Trigger factor (448 aa).

Positions 163–248 constitute a PPIase FKBP-type domain; sequence GDIVVIDFDG…VKDIRVPKAA (86 aa).

Belongs to the FKBP-type PPIase family. Tig subfamily.

The protein resides in the cytoplasm. The enzyme catalyses [protein]-peptidylproline (omega=180) = [protein]-peptidylproline (omega=0). Involved in protein export. Acts as a chaperone by maintaining the newly synthesized protein in an open conformation. Functions as a peptidyl-prolyl cis-trans isomerase. In Rhodospirillum centenum (strain ATCC 51521 / SW), this protein is Trigger factor.